We begin with the raw amino-acid sequence, 299 residues long: Phosphatidylserine decarboxylase proenzyme (299 aa).

Catalysis depends on charge relay system; for autoendoproteolytic cleavage activity residues aspartate 115, histidine 171, and serine 258. The Schiff-base intermediate with substrate; via pyruvic acid; for decarboxylase activity role is filled by serine 258. Pyruvic acid (Ser); by autocatalysis is present on serine 258.

Belongs to the phosphatidylserine decarboxylase family. PSD-B subfamily. Prokaryotic type II sub-subfamily. As to quaternary structure, heterodimer of a large membrane-associated beta subunit and a small pyruvoyl-containing alpha subunit. It depends on pyruvate as a cofactor. In terms of processing, is synthesized initially as an inactive proenzyme. Formation of the active enzyme involves a self-maturation process in which the active site pyruvoyl group is generated from an internal serine residue via an autocatalytic post-translational modification. Two non-identical subunits are generated from the proenzyme in this reaction, and the pyruvate is formed at the N-terminus of the alpha chain, which is derived from the carboxyl end of the proenzyme. The autoendoproteolytic cleavage occurs by a canonical serine protease mechanism, in which the side chain hydroxyl group of the serine supplies its oxygen atom to form the C-terminus of the beta chain, while the remainder of the serine residue undergoes an oxidative deamination to produce ammonia and the pyruvoyl prosthetic group on the alpha chain. During this reaction, the Ser that is part of the protease active site of the proenzyme becomes the pyruvoyl prosthetic group, which constitutes an essential element of the active site of the mature decarboxylase.

It localises to the cell membrane. The enzyme catalyses a 1,2-diacyl-sn-glycero-3-phospho-L-serine + H(+) = a 1,2-diacyl-sn-glycero-3-phosphoethanolamine + CO2. Its pathway is phospholipid metabolism; phosphatidylethanolamine biosynthesis; phosphatidylethanolamine from CDP-diacylglycerol: step 2/2. Functionally, catalyzes the formation of phosphatidylethanolamine (PtdEtn) from phosphatidylserine (PtdSer). The sequence is that of Phosphatidylserine decarboxylase proenzyme from Chlamydia felis (strain Fe/C-56) (Chlamydophila felis).